The following is a 292-amino-acid chain: 4-diphosphocytidyl-2-C-methyl-D-erythritol kinase (292 aa).

K20 is an active-site residue. Residue 103–113 coordinates ATP; that stretch reads PMGGGIGGGSS. The active site involves D145.

The protein belongs to the GHMP kinase family. IspE subfamily.

The enzyme catalyses 4-CDP-2-C-methyl-D-erythritol + ATP = 4-CDP-2-C-methyl-D-erythritol 2-phosphate + ADP + H(+). It participates in isoprenoid biosynthesis; isopentenyl diphosphate biosynthesis via DXP pathway; isopentenyl diphosphate from 1-deoxy-D-xylulose 5-phosphate: step 3/6. In terms of biological role, catalyzes the phosphorylation of the position 2 hydroxy group of 4-diphosphocytidyl-2C-methyl-D-erythritol. The polypeptide is 4-diphosphocytidyl-2-C-methyl-D-erythritol kinase (Cupriavidus necator (strain ATCC 17699 / DSM 428 / KCTC 22496 / NCIMB 10442 / H16 / Stanier 337) (Ralstonia eutropha)).